The following is a 535-amino-acid chain: Inositol 1,4,5-trisphosphate receptor-interacting protein-like 2 (535 aa).

The N-terminal stretch at 1 to 38 (MSVHYTLNLRVFWPLVTGLCTALVCLYHVLRGSGGARA) is a signal peptide. The Extracellular segment spans residues 39 to 43 (EPADG). The helical transmembrane segment at 44 to 64 (VDGGFPLLKVAVLLLLSYVLL) threads the bilayer. Over 65 to 535 (RCRHAVRQRF…RTQGFLEGEP (471 aa)) the chain is Cytoplasmic. A Phosphoserine modification is found at Ser139.

It belongs to the ITPRIP family.

Its subcellular location is the membrane. The sequence is that of Inositol 1,4,5-trisphosphate receptor-interacting protein-like 2 (ITPRIPL2) from Homo sapiens (Human).